Consider the following 486-residue polypeptide: N-succinylglutamate 5-semialdehyde dehydrogenase (486 aa).

220–225 (GSSRTG) contributes to the NAD(+) binding site. Catalysis depends on residues E243 and C277.

It belongs to the aldehyde dehydrogenase family. AstD subfamily.

The catalysed reaction is N-succinyl-L-glutamate 5-semialdehyde + NAD(+) + H2O = N-succinyl-L-glutamate + NADH + 2 H(+). It functions in the pathway amino-acid degradation; L-arginine degradation via AST pathway; L-glutamate and succinate from L-arginine: step 4/5. In terms of biological role, catalyzes the NAD-dependent reduction of succinylglutamate semialdehyde into succinylglutamate. The polypeptide is N-succinylglutamate 5-semialdehyde dehydrogenase (Shewanella baltica (strain OS223)).